Here is a 114-residue protein sequence, read N- to C-terminus: UPF0342 protein SE_1526 (114 aa).

The protein belongs to the UPF0342 family.

The sequence is that of UPF0342 protein SE_1526 from Staphylococcus epidermidis (strain ATCC 12228 / FDA PCI 1200).